The sequence spans 388 residues: Angiopoietin-related protein 5 (388 aa).

The N-terminal stretch at 1–25 (MMSPSQASLLFLNVCIFICGEAVQG) is a signal peptide. N53 is a glycosylation site (N-linked (GlcNAc...) asparagine). The stretch at 98–123 (LRNMMDEQQASLDYLSNQVNELMNRV) forms a coiled coil. The 243-residue stretch at 141 to 383 (RPVQSHGLDC…SVSMKIRRMY (243 aa)) folds into the Fibrinogen C-terminal domain. N-linked (GlcNAc...) asparagine glycosylation is present at N238. Disulfide bonds link C310-C314 and C324-C338. N-linked (GlcNAc...) asparagine glycosylation is present at N329.

Mainly expressed in adult heart.

Its subcellular location is the secreted. In Homo sapiens (Human), this protein is Angiopoietin-related protein 5 (ANGPTL5).